Here is a 520-residue protein sequence, read N- to C-terminus: GMP synthase [glutamine-hydrolyzing] (520 aa).

A Glutamine amidotransferase type-1 domain is found at lysine 13–aspartate 205. Cysteine 90 functions as the Nucleophile in the catalytic mechanism. Catalysis depends on residues histidine 179 and glutamate 181. Residues tryptophan 206–arginine 395 form the GMPS ATP-PPase domain. Serine 233–serine 239 contacts ATP.

As to quaternary structure, homodimer.

It catalyses the reaction XMP + L-glutamine + ATP + H2O = GMP + L-glutamate + AMP + diphosphate + 2 H(+). The protein operates within purine metabolism; GMP biosynthesis; GMP from XMP (L-Gln route): step 1/1. Catalyzes the synthesis of GMP from XMP. In Streptococcus pneumoniae (strain ATCC 700669 / Spain 23F-1), this protein is GMP synthase [glutamine-hydrolyzing].